Here is a 231-residue protein sequence, read N- to C-terminus: Large ribosomal subunit protein uL1 (231 aa).

It belongs to the universal ribosomal protein uL1 family. In terms of assembly, part of the 50S ribosomal subunit.

In terms of biological role, binds directly to 23S rRNA. The L1 stalk is quite mobile in the ribosome, and is involved in E site tRNA release. Functionally, protein L1 is also a translational repressor protein, it controls the translation of the L11 operon by binding to its mRNA. The protein is Large ribosomal subunit protein uL1 of Cellvibrio japonicus (strain Ueda107) (Pseudomonas fluorescens subsp. cellulosa).